We begin with the raw amino-acid sequence, 152 residues long: Small ribosomal subunit protein bS16 (152 aa).

A compositionally biased stretch (basic and acidic residues) spans 118–130 (AEKHKAKASEKKA). Positions 118-152 (AEKHKAKASEKKAAAAASADEAGSAAADDAEGSES) are disordered. The span at 131–144 (AAAASADEAGSAAA) shows a compositional bias: low complexity.

Belongs to the bacterial ribosomal protein bS16 family.

In Beutenbergia cavernae (strain ATCC BAA-8 / DSM 12333 / CCUG 43141 / JCM 11478 / NBRC 16432 / NCIMB 13614 / HKI 0122), this protein is Small ribosomal subunit protein bS16.